Here is a 572-residue protein sequence, read N- to C-terminus: Proline--tRNA ligase (572 aa).

This sequence belongs to the class-II aminoacyl-tRNA synthetase family. ProS type 1 subfamily. As to quaternary structure, homodimer.

Its subcellular location is the cytoplasm. The enzyme catalyses tRNA(Pro) + L-proline + ATP = L-prolyl-tRNA(Pro) + AMP + diphosphate. Its function is as follows. Catalyzes the attachment of proline to tRNA(Pro) in a two-step reaction: proline is first activated by ATP to form Pro-AMP and then transferred to the acceptor end of tRNA(Pro). As ProRS can inadvertently accommodate and process non-cognate amino acids such as alanine and cysteine, to avoid such errors it has two additional distinct editing activities against alanine. One activity is designated as 'pretransfer' editing and involves the tRNA(Pro)-independent hydrolysis of activated Ala-AMP. The other activity is designated 'posttransfer' editing and involves deacylation of mischarged Ala-tRNA(Pro). The misacylated Cys-tRNA(Pro) is not edited by ProRS. The protein is Proline--tRNA ligase of Serratia proteamaculans (strain 568).